A 196-amino-acid chain; its full sequence is Chromophore lyase CpcT/CpeT (196 aa).

The protein belongs to the CpcT/CpeT biliprotein lyase family.

Covalently attaches a chromophore to Cys residue(s) of phycobiliproteins. The polypeptide is Chromophore lyase CpcT/CpeT (Synechococcus sp. (strain WH8020)).